A 542-amino-acid chain; its full sequence is Membrane protein insertase YidC (542 aa).

A helical transmembrane segment spans residues Asn6–Asp26. Positions Val32 to Pro41 are enriched in polar residues. Residues Val32–Ser57 are disordered. Transmembrane regions (helical) follow at residues Leu326–Phe346, Phe350–Tyr370, Gly421–Leu441, Leu458–Met478, and Val501–Gly521.

This sequence belongs to the OXA1/ALB3/YidC family. Type 1 subfamily. As to quaternary structure, interacts with the Sec translocase complex via SecD. Specifically interacts with transmembrane segments of nascent integral membrane proteins during membrane integration.

The protein localises to the cell inner membrane. In terms of biological role, required for the insertion and/or proper folding and/or complex formation of integral membrane proteins into the membrane. Involved in integration of membrane proteins that insert both dependently and independently of the Sec translocase complex, as well as at least some lipoproteins. Aids folding of multispanning membrane proteins. This Shewanella piezotolerans (strain WP3 / JCM 13877) protein is Membrane protein insertase YidC.